We begin with the raw amino-acid sequence, 473 residues long: Protein AUXIN RESPONSE 4 (473 aa).

The segment covering M1–D10 has biased composition (acidic residues). The tract at residues M1–P38 is disordered. A compositionally biased stretch (polar residues) spans S29 to P38. A helical membrane pass occupies residues F44–L64. The region spanning T119–L283 is the AB hydrolase-1 domain.

In terms of tissue distribution, most abundant in root tissue, lesser amounts in rosette leaves, stems and flowers and very little in mature siliques.

The protein localises to the endoplasmic reticulum membrane. In terms of biological role, required for the auxin influx facilitator AUX1 polar trafficking and its asymmetric localization within the plasma membrane. Not involved in the PIN proteins localization. This chain is Protein AUXIN RESPONSE 4 (AXR4), found in Arabidopsis thaliana (Mouse-ear cress).